A 184-amino-acid polypeptide reads, in one-letter code: UPF0301 protein Rsph17029_2659 (184 aa).

It belongs to the UPF0301 (AlgH) family.

This is UPF0301 protein Rsph17029_2659 from Cereibacter sphaeroides (strain ATCC 17029 / ATH 2.4.9) (Rhodobacter sphaeroides).